A 355-amino-acid chain; its full sequence is Fructose-1,6-bisphosphatase (355 aa).

AMP contacts are provided by residues 25–30 (ILDQQH) and 37–41 (TGEFS). Mg(2+) contacts are provided by D78 and E107. 121 to 122 (KY) is a binding site for AMP. 3 residues coordinate Mg(2+): D127, I129, and D130. A substrate-binding site is contributed by 130 to 133 (DGSS). K149 is a binding site for AMP. Residues 230 to 233 (NEGN), 263 to 268 (RYIGSM), Y284, and 294 to 296 (KLR) each bind substrate. Position 300 (E300) interacts with Mg(2+).

This sequence belongs to the FBPase class 1 family. As to quaternary structure, homotetramer. Mg(2+) serves as cofactor.

The enzyme catalyses beta-D-fructose 1,6-bisphosphate + H2O = beta-D-fructose 6-phosphate + phosphate. The protein operates within carbohydrate biosynthesis; gluconeogenesis. Its activity is regulated as follows. Subject to complex allosteric regulation. The enzyme can assume an active R-state, or an inactive T-state. Intermediate conformations may exist. AMP acts as allosteric inhibitor. AMP binding affects the turnover of bound substrate and not the affinity for substrate. In Kluyveromyces lactis (strain ATCC 8585 / CBS 2359 / DSM 70799 / NBRC 1267 / NRRL Y-1140 / WM37) (Yeast), this protein is Fructose-1,6-bisphosphatase (FBP1).